The sequence spans 429 residues: Enolase (429 aa).

Q162 lines the (2R)-2-phosphoglycerate pocket. E204 serves as the catalytic Proton donor. Mg(2+)-binding residues include D241, E288, and D315. (2R)-2-phosphoglycerate contacts are provided by K340, R369, S370, and K391. The Proton acceptor role is filled by K340.

Belongs to the enolase family. Mg(2+) serves as cofactor.

Its subcellular location is the cytoplasm. The protein resides in the secreted. The protein localises to the cell surface. The enzyme catalyses (2R)-2-phosphoglycerate = phosphoenolpyruvate + H2O. It participates in carbohydrate degradation; glycolysis; pyruvate from D-glyceraldehyde 3-phosphate: step 4/5. Catalyzes the reversible conversion of 2-phosphoglycerate (2-PG) into phosphoenolpyruvate (PEP). It is essential for the degradation of carbohydrates via glycolysis. In Bacteroides fragilis (strain ATCC 25285 / DSM 2151 / CCUG 4856 / JCM 11019 / LMG 10263 / NCTC 9343 / Onslow / VPI 2553 / EN-2), this protein is Enolase.